Consider the following 399-residue polypeptide: 1-deoxy-D-xylulose 5-phosphate reductoisomerase (399 aa).

Residues T10, G11, S12, I13, and N124 each coordinate NADPH. A 1-deoxy-D-xylulose 5-phosphate-binding site is contributed by K125. NADPH is bound at residue E126. D150 is a Mn(2+) binding site. Residues S151, E152, S186, and H209 each coordinate 1-deoxy-D-xylulose 5-phosphate. Residue E152 coordinates Mn(2+). G215 lines the NADPH pocket. 1-deoxy-D-xylulose 5-phosphate contacts are provided by S222, N227, K228, and E231. E231 provides a ligand contact to Mn(2+).

It belongs to the DXR family. The cofactor is Mg(2+). Requires Mn(2+) as cofactor.

It catalyses the reaction 2-C-methyl-D-erythritol 4-phosphate + NADP(+) = 1-deoxy-D-xylulose 5-phosphate + NADPH + H(+). It participates in isoprenoid biosynthesis; isopentenyl diphosphate biosynthesis via DXP pathway; isopentenyl diphosphate from 1-deoxy-D-xylulose 5-phosphate: step 1/6. In terms of biological role, catalyzes the NADPH-dependent rearrangement and reduction of 1-deoxy-D-xylulose-5-phosphate (DXP) to 2-C-methyl-D-erythritol 4-phosphate (MEP). This chain is 1-deoxy-D-xylulose 5-phosphate reductoisomerase, found in Psychromonas ingrahamii (strain DSM 17664 / CCUG 51855 / 37).